The following is an 808-amino-acid chain: Leucine-rich repeat-containing protein 41 (808 aa).

Residues 45 to 54 form an interaction with Elongin BC complex region; it reads ALFELCGRAV. Residues Ser155, Ser276, and Ser326 each carry the phosphoserine modification. 2 disordered regions span residues 269-289 and 304-404; these read ASRGRAPSRDEGSLLLGSRRP and TRRK…GSGA. Thr327 bears the Phosphothreonine mark. Positions 357-379 are enriched in low complexity; it reads PSSAPTAASSSTSSKRAPASSVS. Phosphoserine is present on Ser369. Basic residues predominate over residues 383–397; that stretch reads PLKRFKRATGKKGPR. 7 LRR repeats span residues 483–503, 514–526, 527–551, 609–631, 632–655, 697–724, and 727–748; these read WVSLESLTLSYNGLGSNIFRL, AGCRLRALHLSDL, FSPLPILELTRAIVRALPLLRVLSI, SGSLQQLSLDSATFASPQDFGLV, LQTLKEYNLSLKRLSFHDMNLADC, NSTLKGLRLPGNRLGNAGLLALADVFSE, and SSSLCQLDISSNCIKPDGLLEF.

Part of an E3 ubiquitin-protein ligase complex with Elongin BC (ELOB and ELOC), RBX1 and CUL5. Component of a probable ECS(LRRC41) complex which contains CUL5, RNF7/RBX2, Elongin BC and LRRC41. Interacts with CUL5, RNF7, ELOB and ELOC.

The protein operates within protein modification; protein ubiquitination. Functionally, probable substrate recognition component of an ECS (Elongin BC-CUL2/5-SOCS-box protein) E3 ubiquitin ligase complex which mediates the ubiquitination and subsequent proteasomal degradation of target proteins. The polypeptide is Leucine-rich repeat-containing protein 41 (Lrrc41) (Rattus norvegicus (Rat)).